The following is a 929-amino-acid chain: Protocadherin gamma-B7 (929 aa).

Positions 1–30 (MGGSCAQRRRAGPRQVLFPLLLPLFYPTLC) are cleaved as a signal peptide. 6 consecutive Cadherin domains span residues 31-133 (EPIR…APQF), 134-242 (QKDE…PPVF), 243-347 (SQDV…SPEI), 348-452 (IITS…APVF), 453-562 (GQSA…APRV), and 570-675 (DGSA…LPDF). Over 31 to 691 (EPIRYSIPEE…SDSQAEMQFY (661 aa)) the chain is Extracellular. 2 N-linked (GlcNAc...) asparagine glycosylation sites follow: Asn419 and Asn545. The helical transmembrane segment at 692-712 (LVVALALISVLFLLAVILAIA) threads the bilayer. Over 713 to 929 (LRLRQSFSPT…KKKSGKKEKK (217 aa)) the chain is Cytoplasmic. 2 disordered regions span residues 806–838 (QAPP…WPNN) and 899–929 (ATLT…KEKK). Over residues 807 to 838 (APPNTDWRFSQAQRPGTSGSQNGDDTGTWPNN) the composition is skewed to polar residues. Residues 919 to 929 (NKKKSGKKEKK) are compositionally biased toward basic residues.

Its subcellular location is the cell membrane. In terms of biological role, potential calcium-dependent cell-adhesion protein. May be involved in the establishment and maintenance of specific neuronal connections in the brain. This is Protocadherin gamma-B7 (PCDHGB7) from Pan troglodytes (Chimpanzee).